We begin with the raw amino-acid sequence, 862 residues long: Probable glutaminase ARB_05535/05536 (862 aa).

A signal peptide spans 1-19 (MLSWVLLAWAVACSALAGA). 7 N-linked (GlcNAc...) asparagine glycosylation sites follow: asparagine 106, asparagine 273, asparagine 436, asparagine 448, asparagine 486, asparagine 610, and asparagine 744. The interval 798 to 862 (FLDDKDNNSP…SQMTIVNEND (65 aa)) is disordered. Residues 853–862 (SQMTIVNEND) are compositionally biased toward polar residues.

The protein belongs to the fungal glutaminase gtaA family.

It localises to the secreted. The catalysed reaction is L-glutamine + H2O = L-glutamate + NH4(+). Glutaminase catalyzes the hydrolysis of glutamine to glutamic acid and plays a key role in nitrogen metabolism. This is Probable glutaminase ARB_05535/05536 from Arthroderma benhamiae (strain ATCC MYA-4681 / CBS 112371) (Trichophyton mentagrophytes).